A 262-amino-acid chain; its full sequence is RNA-binding protein 7 (262 aa).

G2 is subject to N-acetylglycine. The region spanning 10–87 (RTLFVGNLET…RPIKIQFRAG (78 aa)) is the RRM domain. ZCCHC8 binding regions lie at residues 25–35 (LLFELFHQAGP) and 59–76 (HEVS…IKLF). The tract at residues 95-121 (VSLSYPQHHVGNSSPTSTSPSRTVDNM) is disordered. Residues S133 and S134 each carry the phosphoserine modification. R149 is modified (omega-N-methylarginine). 2 disordered regions span residues 159–212 (SPHL…HYSR) and 242–262 (SHDY…SSRH). The segment covering 165 to 194 (SGFSPSAQSHNHTFNQSSSSQWRQDTPSSQ) has biased composition (polar residues). At S201 the chain carries Phosphoserine. Positions 242-253 (SHDYDNRRDSGR) are enriched in basic and acidic residues.

In terms of assembly, component of the nuclear exosome targeting (NEXT) complex composed of MTREX, ZCCHC8, and RBM7 that directs a subset of non-coding short-lived RNAs for exosomal degradation. Interacts with ZCCHC8 and SF3B2/SAP145. Binds to MTREX through ZCCHC8. Interacts with YWHAE and YWHAZ; these interactions are stress-dependent and RBM7 phosphorylation dependent; release RNA from the NEXT complex and may affect RNA targeting to the nuclear RNA exosomome for degradation. Interacts with MEPCE and LARP7, the core subunits of 7SK snRNP; upon genotoxic stress this interaction is enhanced, triggering the release of inactive P-TEFb complex from the core and P-TEFb complex activation. Post-translationally, phosphorylated at Ser-133 by MAPK14/p38-alpha-activated MAPKAPK2/MK2; this phosphorylation is stress-dependent; this phosphorylation decreases its RNA-binding capacity therefore affecting RNA nuclear exosome-mediated degradation. This phosphorylation mediates YWHAE and YWHAZ interactions.

It localises to the nucleus. It is found in the nucleoplasm. In terms of biological role, RNA-binding subunit of the trimeric nuclear exosome targeting (NEXT) complex, a complex that functions as an RNA exosome cofactor that directs a subset of non-coding short-lived RNAs for exosomal degradation. NEXT is involved in surveillance and turnover of aberrant transcripts and non-coding RNAs. Binds preferentially polyuridine sequences and associates with newly synthesized RNAs, including pre-mRNAs and short-lived exosome substrates such as promoter upstream transcripts (PROMPTs), enhancer RNAs (eRNAs), and 3'-extended products from small nuclear RNAs (snRNAs). Participates in several biological processes including DNA damage response (DDR) and stress response. During stress response, activation of the p38MAPK-MK2 pathway decreases RBM7-RNA-binding and subsequently the RNA exosome degradation activities, thereby modulating the turnover of non-coding transcriptome. Participates in DNA damage response (DDR), through its interaction with MEPCE and LARP7, the core subunits of 7SK snRNP complex, that release the positive transcription elongation factor b (P-TEFb) complex from the 7SK snRNP. In turn, activation of P-TEFb complex induces the transcription of P-TEFb-dependent DDR genes to promote cell viability. This is RNA-binding protein 7 from Bos taurus (Bovine).